A 572-amino-acid chain; its full sequence is Isocitrate dehydrogenase kinase/phosphatase (572 aa).

Residues 317–323 and Lys338 contribute to the ATP site; that span reads APGVRGM. Residue Asp373 is part of the active site.

The protein belongs to the AceK family.

The protein resides in the cytoplasm. It carries out the reaction L-seryl-[isocitrate dehydrogenase] + ATP = O-phospho-L-seryl-[isocitrate dehydrogenase] + ADP + H(+). Its function is as follows. Bifunctional enzyme which can phosphorylate or dephosphorylate isocitrate dehydrogenase (IDH) on a specific serine residue. This is a regulatory mechanism which enables bacteria to bypass the Krebs cycle via the glyoxylate shunt in response to the source of carbon. When bacteria are grown on glucose, IDH is fully active and unphosphorylated, but when grown on acetate or ethanol, the activity of IDH declines drastically concomitant with its phosphorylation. The sequence is that of Isocitrate dehydrogenase kinase/phosphatase from Ectopseudomonas mendocina (strain ymp) (Pseudomonas mendocina).